Consider the following 73-residue polypeptide: Translation initiation factor IF-1 (73 aa).

Positions 1–72 constitute an S1-like domain; sequence MAKDEIIEFE…SKGRITYRGK (72 aa).

This sequence belongs to the IF-1 family. Component of the 30S ribosomal translation pre-initiation complex which assembles on the 30S ribosome in the order IF-2 and IF-3, IF-1 and N-formylmethionyl-tRNA(fMet); mRNA recruitment can occur at any time during PIC assembly.

The protein localises to the cytoplasm. In terms of biological role, one of the essential components for the initiation of protein synthesis. Stabilizes the binding of IF-2 and IF-3 on the 30S subunit to which N-formylmethionyl-tRNA(fMet) subsequently binds. Helps modulate mRNA selection, yielding the 30S pre-initiation complex (PIC). Upon addition of the 50S ribosomal subunit IF-1, IF-2 and IF-3 are released leaving the mature 70S translation initiation complex. This chain is Translation initiation factor IF-1, found in Psychrobacter arcticus (strain DSM 17307 / VKM B-2377 / 273-4).